Here is a 197-residue protein sequence, read N- to C-terminus: Phosphoheptose isomerase (197 aa).

The SIS domain occupies 36-197 (MVQCLVSEGK…IDQQLFGSTE (162 aa)). Position 51–53 (51–53 (NGG)) interacts with substrate. 2 residues coordinate Zn(2+): His60 and Glu64. Residues Glu64, 93–94 (ND), 119–121 (STS), Ser124, and Gln174 contribute to the substrate site. Residues Gln174 and His182 each contribute to the Zn(2+) site.

The protein belongs to the SIS family. GmhA subfamily. Homotetramer. Zn(2+) is required as a cofactor.

The protein resides in the cytoplasm. The catalysed reaction is 2 D-sedoheptulose 7-phosphate = D-glycero-alpha-D-manno-heptose 7-phosphate + D-glycero-beta-D-manno-heptose 7-phosphate. It participates in carbohydrate biosynthesis; D-glycero-D-manno-heptose 7-phosphate biosynthesis; D-glycero-alpha-D-manno-heptose 7-phosphate and D-glycero-beta-D-manno-heptose 7-phosphate from sedoheptulose 7-phosphate: step 1/1. Catalyzes the isomerization of sedoheptulose 7-phosphate in D-glycero-D-manno-heptose 7-phosphate. The protein is Phosphoheptose isomerase of Chromohalobacter salexigens (strain ATCC BAA-138 / DSM 3043 / CIP 106854 / NCIMB 13768 / 1H11).